The primary structure comprises 174 residues: Adenine phosphoribosyltransferase (174 aa).

It belongs to the purine/pyrimidine phosphoribosyltransferase family. As to quaternary structure, homodimer.

It localises to the cytoplasm. The catalysed reaction is AMP + diphosphate = 5-phospho-alpha-D-ribose 1-diphosphate + adenine. It participates in purine metabolism; AMP biosynthesis via salvage pathway; AMP from adenine: step 1/1. Functionally, catalyzes a salvage reaction resulting in the formation of AMP, that is energically less costly than de novo synthesis. This is Adenine phosphoribosyltransferase from Mycobacterium sp. (strain JLS).